The following is a 696-amino-acid chain: Catalase (696 aa).

Catalysis depends on residues His64 and Asn137. The segment at Ser187 to Lys211 is disordered. Positions Ala189 to Glu208 are enriched in polar residues. Residue Tyr353 participates in heme binding.

Belongs to the catalase family. Heme serves as cofactor.

The enzyme catalyses 2 H2O2 = O2 + 2 H2O. Functionally, occurs in almost all aerobically respiring organisms and serves to protect cells from the toxic effects of hydrogen peroxide. This is Catalase from Penicillium janthinellum (Penicillium vitale).